The chain runs to 340 residues: GTPase Obg (340 aa).

The region spanning 1–159 (MGFIDEVKLC…KHVLLKLKVL (159 aa)) is the Obg domain. One can recognise an OBG-type G domain in the interval 160–329 (SDVGIIGMPN…LSEKLKKSNS (170 aa)). Residues 166–173 (GMPNAGKS), 191–195 (FTTVR), 212–215 (DIPG), 279–282 (NKCD), and 310–312 (NGD) contribute to the GTP site. Ser173 and Thr193 together coordinate Mg(2+).

This sequence belongs to the TRAFAC class OBG-HflX-like GTPase superfamily. OBG GTPase family. As to quaternary structure, monomer. It depends on Mg(2+) as a cofactor.

It localises to the cytoplasm. In terms of biological role, an essential GTPase which binds GTP, GDP and possibly (p)ppGpp with moderate affinity, with high nucleotide exchange rates and a fairly low GTP hydrolysis rate. Plays a role in control of the cell cycle, stress response, ribosome biogenesis and in those bacteria that undergo differentiation, in morphogenesis control. In Wolbachia pipientis wMel, this protein is GTPase Obg.